The chain runs to 887 residues: Alpha-amylase 3, chloroplastic (887 aa).

Residues 1 to 55 constitute a chloroplast transit peptide; the sequence is MSTVPIESLLHHSYLRHNSKVNRGNRSFIPISLNLRSHFTSNKLLHSIGKSVGVS. Cysteines 499 and 587 form a disulfide. Substrate-binding positions include 545 to 546 and 664 to 669; these read YM and RLDFVR. D666 functions as the Nucleophile in the catalytic mechanism. E691 acts as the Proton donor in catalysis. Substrate contacts are provided by residues W693, S695, Q712, K754, 760–762, H773, Q779, K857, and W884; that span reads GWW.

Belongs to the glycosyl hydrolase 13 family. Ca(2+) serves as cofactor. In terms of tissue distribution, expressed in developing siliques.

Its subcellular location is the plastid. It is found in the chloroplast. It catalyses the reaction Endohydrolysis of (1-&gt;4)-alpha-D-glucosidic linkages in polysaccharides containing three or more (1-&gt;4)-alpha-linked D-glucose units.. Redox-regulated, with the highest activity under reducing conditions. The midpoint redox potential is -329 mV. The disulfide bridge between Cys-499 and Cys-587 inhibits catalysis. Inhibited by CuCl(2) and H(2)O(2). Possesses endoamylolytic activity in vitro, but seems not required for breakdown of transitory starch in leaves. May be involved in the determination of the final structure of glucans by shortening long linear phospho-oligosaccharides in the chloroplast stroma. Can act on both soluble and insoluble glucan substrates to release small linear and branched malto-oligosaccharides. Works synergistically with beta-amylase toward efficient starch degradation. Has activity against p-nitrophenyl maltoheptaoside (BPNP-G7), amylopectin and beta-limit dextrin. Involved in stress-induced starch degradation. In Arabidopsis thaliana (Mouse-ear cress), this protein is Alpha-amylase 3, chloroplastic.